The sequence spans 337 residues: MNAPQAPVLVADIGGTNARFALANPTLTSAPLLNDSMREFAVIEFPSLGEAAQHYLHHIGIHTTKGVFAIAGHVDGDEARITNHPWVITRTRTATMLGFDTLHLINDFVAQAMAISVLGPQDVIQIGSAKWEQFPLSAATRNYGIIGPGTGLGVGGLMIRNGRCYPLETEGGHVSFPPSTPEEIRILEILSQQFGRVSNERLISGPGIVNIHRALSEIDGIDPGPLRPQDITMRAADGDIRATRTINLFCNIFGTITGDLVLIQGAWDGVFLTGGLVPKLLNSIQHSGFRQRFEHKGRFSAIMARIPSLAVIHPHPGLLGAAAYARDTEQVPQEIKA.

11–16 (ADIGGT) contacts ATP.

It belongs to the bacterial glucokinase family.

The protein resides in the cytoplasm. It catalyses the reaction D-glucose + ATP = D-glucose 6-phosphate + ADP + H(+). This chain is Glucokinase, found in Xylella fastidiosa (strain M23).